The chain runs to 142 residues: Relaxin-3 (142 aa).

The signal sequence occupies residues 1 to 25 (MARYMLLLLLAVWVLTGELWPGAEA). Intrachain disulfides connect Cys-35–Cys-129, Cys-47–Cys-142, and Cys-128–Cys-133. Positions 55-118 (SDILAHEAMG…GTPGVLRGSR (64 aa)) are cleaved as a propeptide — connecting peptide.

Belongs to the insulin family. As to quaternary structure, heterodimer of a B chain and an A chain linked by two disulfide bonds.

It localises to the secreted. Functionally, may play a role in neuropeptide signaling processes. Ligand for LGR7, RXFP3 and RXFP4. In Homo sapiens (Human), this protein is Relaxin-3 (RLN3).